The following is a 385-amino-acid chain: Glucans biosynthesis protein C (385 aa).

Helical transmembrane passes span 17–37 (AWLM…SHTW), 60–80 (MQVF…RYPL), 91–111 (VGIP…IMLQ), 137–157 (ISHL…VWIF), 173–193 (KFSM…YAVI), 212–232 (FIVM…LAFI), 239–259 (LFTT…VAYL), 274–294 (TESV…FSFG), 311–331 (ASLF…AYIT), and 338–358 (WLGF…LYEI).

It belongs to the acyltransferase 3 family. OpgC subfamily.

The protein resides in the cell membrane. Its pathway is glycan metabolism; osmoregulated periplasmic glucan (OPG) biosynthesis. Functionally, necessary for the succinyl substitution of periplasmic glucans. Could catalyze the transfer of succinyl residues from the cytoplasmic side of the membrane to the nascent glucan backbones on the periplasmic side of the membrane. The polypeptide is Glucans biosynthesis protein C (Shigella sonnei (strain Ss046)).